We begin with the raw amino-acid sequence, 488 residues long: Microtubule-destabilizing protein 60 (488 aa).

Over residues 25–56 (AQEVSRFSENSNPNFVSHSTPLEKSSKSSAQK) the composition is skewed to polar residues. Disordered stretches follow at residues 25–71 (AQEV…VFSP), 262–304 (HASV…TKKQ), and 436–457 (DRPF…PKFN). A compositionally biased stretch (low complexity) spans 264–280 (SVSSSWDNSVSSLNSNG).

It belongs to the TPX2 family.

The protein localises to the cytoplasm. The protein resides in the cytoskeleton. In terms of biological role, binds directly to microtubules. Microtubule-destabilizing protein involved in the PIF3-dependent positive regulation of hypocotyl cell elongation via the modulation of cortical microtubules dynamic in response to light and ethylene signaling. Promotes submergence-induced and ethylene-dependent underwater hypocotyl elongation. This is Microtubule-destabilizing protein 60 from Arabidopsis thaliana (Mouse-ear cress).